Consider the following 208-residue polypeptide: Urease accessory protein UreG 1 (208 aa).

14-21 (GPVGSGKT) contacts GTP.

Belongs to the SIMIBI class G3E GTPase family. UreG subfamily. As to quaternary structure, homodimer. UreD, UreF and UreG form a complex that acts as a GTP-hydrolysis-dependent molecular chaperone, activating the urease apoprotein by helping to assemble the nickel containing metallocenter of UreC. The UreE protein probably delivers the nickel.

The protein resides in the cytoplasm. Its function is as follows. Facilitates the functional incorporation of the urease nickel metallocenter. This process requires GTP hydrolysis, probably effectuated by UreG. In terms of biological role, disruption of the ure1 gene cluster suggests that it protects brucellae during their passage through the stomach. The major route of infection in human brucellosis is oral. The polypeptide is Urease accessory protein UreG 1 (Brucella abortus (strain 2308)).